Reading from the N-terminus, the 108-residue chain is ATP-dependent Clp protease adapter protein ClpS (108 aa).

The protein belongs to the ClpS family. Binds to the N-terminal domain of the chaperone ClpA.

In terms of biological role, involved in the modulation of the specificity of the ClpAP-mediated ATP-dependent protein degradation. This is ATP-dependent Clp protease adapter protein ClpS from Mycobacterium leprae (strain TN).